The sequence spans 277 residues: Putative phosphoenolpyruvate synthase regulatory protein (277 aa).

157–164 (GVSRSGKT) contacts ADP.

This sequence belongs to the pyruvate, phosphate/water dikinase regulatory protein family. PSRP subfamily.

It carries out the reaction [pyruvate, water dikinase] + ADP = [pyruvate, water dikinase]-phosphate + AMP + H(+). The catalysed reaction is [pyruvate, water dikinase]-phosphate + phosphate + H(+) = [pyruvate, water dikinase] + diphosphate. Its function is as follows. Bifunctional serine/threonine kinase and phosphorylase involved in the regulation of the phosphoenolpyruvate synthase (PEPS) by catalyzing its phosphorylation/dephosphorylation. The sequence is that of Putative phosphoenolpyruvate synthase regulatory protein from Vibrio atlanticus (strain LGP32) (Vibrio splendidus (strain Mel32)).